The sequence spans 293 residues: Bifunctional protein FolD (293 aa).

NADP(+) is bound by residues Gly-165–Ser-167, Ser-190, and Ile-231.

It belongs to the tetrahydrofolate dehydrogenase/cyclohydrolase family. Homodimer.

The catalysed reaction is (6R)-5,10-methylene-5,6,7,8-tetrahydrofolate + NADP(+) = (6R)-5,10-methenyltetrahydrofolate + NADPH. The enzyme catalyses (6R)-5,10-methenyltetrahydrofolate + H2O = (6R)-10-formyltetrahydrofolate + H(+). The protein operates within one-carbon metabolism; tetrahydrofolate interconversion. Functionally, catalyzes the oxidation of 5,10-methylenetetrahydrofolate to 5,10-methenyltetrahydrofolate and then the hydrolysis of 5,10-methenyltetrahydrofolate to 10-formyltetrahydrofolate. This Parasynechococcus marenigrum (strain WH8102) protein is Bifunctional protein FolD.